Reading from the N-terminus, the 334-residue chain is N-acetyl-gamma-glutamyl-phosphate reductase (334 aa).

The active site involves C154.

Belongs to the NAGSA dehydrogenase family. Type 1 subfamily.

Its subcellular location is the cytoplasm. It catalyses the reaction N-acetyl-L-glutamate 5-semialdehyde + phosphate + NADP(+) = N-acetyl-L-glutamyl 5-phosphate + NADPH + H(+). It participates in amino-acid biosynthesis; L-arginine biosynthesis; N(2)-acetyl-L-ornithine from L-glutamate: step 3/4. In terms of biological role, catalyzes the NADPH-dependent reduction of N-acetyl-5-glutamyl phosphate to yield N-acetyl-L-glutamate 5-semialdehyde. The protein is N-acetyl-gamma-glutamyl-phosphate reductase of Vibrio parahaemolyticus serotype O3:K6 (strain RIMD 2210633).